We begin with the raw amino-acid sequence, 359 residues long: Squamosa promoter-binding-like protein 13A (359 aa).

The tract at residues 75–94 (AKPEGSRSSSSKRTRGNGVG) is disordered. Residues 98–175 (MPICLVDGCD…DGHNRRRRKP (78 aa)) form an SBP-type zinc finger. Residues cysteine 101, cysteine 106, cysteine 123, histidine 126, cysteine 142, cysteine 145, histidine 149, and cysteine 161 each contribute to the Zn(2+) site. The short motif at 158-174 (KRSCRKRLDGHNRRRRK) is the Bipartite nuclear localization signal element.

It depends on Zn(2+) as a cofactor.

It is found in the nucleus. Functionally, trans-acting factor that binds specifically to the consensus nucleotide sequence 5'-TNCGTACAA-3'. The protein is Squamosa promoter-binding-like protein 13A (SPL13A) of Arabidopsis thaliana (Mouse-ear cress).